The following is a 137-amino-acid chain: DNA-binding protein H-NS (137 aa).

A DNA-binding region spans residues 112–117 (QGRTPA).

Belongs to the histone-like protein H-NS family. Homodimer that oligomerizes on DNA into higher-order complexes that form bridges between disparate regions of DNA compacting it. Interacts with Hha, Cnu and StpA.

Its subcellular location is the cytoplasm. It is found in the nucleoid. In terms of biological role, a DNA-binding protein implicated in transcriptional repression and chromosome organization and compaction. Binds nucleation sites in AT-rich DNA and bridges them, forming higher-order nucleoprotein complexes and condensing the chromosome. As many horizontally transferred genes are AT-rich, it plays a central role in silencing foreign genes. A subset of genes are repressed by H-NS in association with other proteins. The sequence is that of DNA-binding protein H-NS (hns) from Escherichia coli O6:H1 (strain CFT073 / ATCC 700928 / UPEC).